The sequence spans 874 residues: Alanine--tRNA ligase (874 aa).

Residues His-565, His-569, Cys-666, and His-670 each coordinate Zn(2+).

This sequence belongs to the class-II aminoacyl-tRNA synthetase family. Requires Zn(2+) as cofactor.

It is found in the cytoplasm. It carries out the reaction tRNA(Ala) + L-alanine + ATP = L-alanyl-tRNA(Ala) + AMP + diphosphate. Catalyzes the attachment of alanine to tRNA(Ala) in a two-step reaction: alanine is first activated by ATP to form Ala-AMP and then transferred to the acceptor end of tRNA(Ala). Also edits incorrectly charged Ser-tRNA(Ala) and Gly-tRNA(Ala) via its editing domain. This chain is Alanine--tRNA ligase, found in Polynucleobacter asymbioticus (strain DSM 18221 / CIP 109841 / QLW-P1DMWA-1) (Polynucleobacter necessarius subsp. asymbioticus).